The sequence spans 319 residues: Thioredoxin reductase 1 (319 aa).

Residues 11-14, 40-41, Q45, N54, V87, C145, D288, and 295-297 contribute to the FAD site; these read SGPA, IA, and RQA. A disulfide bond links C142 and C145. A Phosphoserine modification is found at S303.

Belongs to the class-II pyridine nucleotide-disulfide oxidoreductase family. As to quaternary structure, homodimer. The cofactor is FAD.

Its subcellular location is the cytoplasm. The protein localises to the mitochondrion intermembrane space. It catalyses the reaction [thioredoxin]-dithiol + NADP(+) = [thioredoxin]-disulfide + NADPH + H(+). Its function is as follows. Central component in the thioredoxin system. Reduces thioredoxins 1 and 2. In Saccharomyces cerevisiae (strain ATCC 204508 / S288c) (Baker's yeast), this protein is Thioredoxin reductase 1 (TRR1).